Here is a 198-residue protein sequence, read N- to C-terminus: Translation machinery-associated protein 22 (198 aa).

Residues Val-99 to Leu-170 enclose the SUI1 domain.

Belongs to the DENR family. Interacts with the 40S ribosomal subunit.

It is found in the cytoplasm. In Saccharomyces cerevisiae (strain YJM789) (Baker's yeast), this protein is Translation machinery-associated protein 22 (TMA22).